Here is a 221-residue protein sequence, read N- to C-terminus: PKHD-type hydroxylase Pro_1271 (221 aa).

Residues 80–174 (KVHGVMFSKS…RIVCVGWIQS (95 aa)) enclose the Fe2OG dioxygenase domain. Residues His-98, Asp-100, and His-155 each coordinate Fe cation. Arg-165 contacts 2-oxoglutarate.

Requires Fe(2+) as cofactor. The cofactor is L-ascorbate.

The protein is PKHD-type hydroxylase Pro_1271 of Prochlorococcus marinus (strain SARG / CCMP1375 / SS120).